The chain runs to 900 residues: Vacuolar membrane protein pep3 (900 aa).

Positions 1–20 (MSLAEDWIDPNSSEDSDIQE) are disordered. 4 TPR repeats span residues 314-345 (HLAF…SPHE), 373-406 (NNET…NTVL), 408-436 (GYAE…VEEV), and 546-579 (MKDQ…ETLI). One copy of the CHCR repeat lies at 602 to 756 (DLDVHALIPS…MFSKKSGIKE (155 aa)). The RING-type; atypical zinc finger occupies 837–884 (CWHCNQPLFSEPFVLFPCQHAFHRSCMLEKTYKLASEKNILKECQLCG).

The protein belongs to the VPS18 family.

It is found in the vacuole membrane. In terms of biological role, required for vacuolar biogenesis. The polypeptide is Vacuolar membrane protein pep3 (pep3) (Schizosaccharomyces pombe (strain 972 / ATCC 24843) (Fission yeast)).